Consider the following 470-residue polypeptide: Uronate isomerase (470 aa).

It belongs to the metallo-dependent hydrolases superfamily. Uronate isomerase family.

It catalyses the reaction D-glucuronate = D-fructuronate. It carries out the reaction aldehydo-D-galacturonate = keto-D-tagaturonate. It participates in carbohydrate metabolism; pentose and glucuronate interconversion. The chain is Uronate isomerase from Salmonella typhi.